Here is a 447-residue protein sequence, read N- to C-terminus: N-succinylarginine dihydrolase (447 aa).

Substrate is bound by residues 19-28 (AGLSVGNKAS), Asn-110, and 137-138 (HR). The active site involves Glu-174. A substrate-binding site is contributed by Arg-213. His-249 is a catalytic residue. Residues Asp-251 and Asn-365 each contribute to the substrate site. Residue Cys-371 is the Nucleophile of the active site.

Belongs to the succinylarginine dihydrolase family. Homodimer.

The enzyme catalyses N(2)-succinyl-L-arginine + 2 H2O + 2 H(+) = N(2)-succinyl-L-ornithine + 2 NH4(+) + CO2. It functions in the pathway amino-acid degradation; L-arginine degradation via AST pathway; L-glutamate and succinate from L-arginine: step 2/5. Its function is as follows. Catalyzes the hydrolysis of N(2)-succinylarginine into N(2)-succinylornithine, ammonia and CO(2). The protein is N-succinylarginine dihydrolase of Photorhabdus laumondii subsp. laumondii (strain DSM 15139 / CIP 105565 / TT01) (Photorhabdus luminescens subsp. laumondii).